The sequence spans 280 residues: Energy-coupling factor transporter ATP-binding protein EcfA2 (280 aa).

The 243-residue stretch at 3–245 folds into the ABC transporter domain; sequence IEFKNVSYTY…VELLESKQLG (243 aa). 40–47 contacts ATP; sequence GHTGSGKS.

This sequence belongs to the ABC transporter superfamily. Energy-coupling factor EcfA family. Forms a stable energy-coupling factor (ECF) transporter complex composed of 2 membrane-embedded substrate-binding proteins (S component), 2 ATP-binding proteins (A component) and 2 transmembrane proteins (T component).

It is found in the cell membrane. In terms of biological role, ATP-binding (A) component of a common energy-coupling factor (ECF) ABC-transporter complex. Unlike classic ABC transporters this ECF transporter provides the energy necessary to transport a number of different substrates. In Streptococcus agalactiae serotype Ia (strain ATCC 27591 / A909 / CDC SS700), this protein is Energy-coupling factor transporter ATP-binding protein EcfA2.